Reading from the N-terminus, the 188-residue chain is Ribosome-recycling factor (188 aa).

The protein belongs to the RRF family.

The protein resides in the cytoplasm. Functionally, responsible for the release of ribosomes from messenger RNA at the termination of protein biosynthesis. May increase the efficiency of translation by recycling ribosomes from one round of translation to another. The sequence is that of Ribosome-recycling factor from Lawsonia intracellularis (strain PHE/MN1-00).